Consider the following 89-residue polypeptide: Small ribosomal subunit protein uS15 (89 aa).

It belongs to the universal ribosomal protein uS15 family. Part of the 30S ribosomal subunit. Forms a bridge to the 50S subunit in the 70S ribosome, contacting the 23S rRNA.

Functionally, one of the primary rRNA binding proteins, it binds directly to 16S rRNA where it helps nucleate assembly of the platform of the 30S subunit by binding and bridging several RNA helices of the 16S rRNA. In terms of biological role, forms an intersubunit bridge (bridge B4) with the 23S rRNA of the 50S subunit in the ribosome. In Bradyrhizobium sp. (strain ORS 278), this protein is Small ribosomal subunit protein uS15.